The primary structure comprises 104 residues: Large ribosomal subunit protein uL23 (104 aa).

It belongs to the universal ribosomal protein uL23 family. Part of the 50S ribosomal subunit. Contacts protein L29, and trigger factor when it is bound to the ribosome.

One of the early assembly proteins it binds 23S rRNA. One of the proteins that surrounds the polypeptide exit tunnel on the outside of the ribosome. Forms the main docking site for trigger factor binding to the ribosome. The sequence is that of Large ribosomal subunit protein uL23 from Burkholderia multivorans (strain ATCC 17616 / 249).